Reading from the N-terminus, the 399-residue chain is Glutathione S-transferase LANCL1 (399 aa).

Residue alanine 2 is modified to N-acetylalanine. Lysine 142 is modified (N6-acetyllysine). Cysteine 276 serves as a coordination point for Zn(2+). Lysine 317 serves as a coordination point for glutathione. Zn(2+) is bound by residues cysteine 322 and histidine 323. Residue arginine 364–aspartate 367 coordinates glutathione.

This sequence belongs to the LanC-like protein family. Interacts with the C-terminal of STOM. Interacts with the EPS8 SH3 domain. Interaction with EPS8 is inhibited by glutathione binding. Expressed in brain.

The protein localises to the cytoplasm. The protein resides in the cell membrane. The enzyme catalyses RX + glutathione = an S-substituted glutathione + a halide anion + H(+). It catalyses the reaction 1-chloro-2,4-dinitrobenzene + glutathione = 2,4-dinitrophenyl-S-glutathione + chloride + H(+). In terms of biological role, functions as a glutathione transferase. Catalyzes conjugation of the glutathione (GSH) to artificial substrates 1-chloro-2,4-dinitrobenzene (CDNB) and p-nitrophenyl acetate. Mitigates neuronal oxidative stress during normal postnatal development and in response to oxidative stresses probably through GSH antioxidant defense mechanism. May play a role in EPS8 signaling. Binds glutathione. The chain is Glutathione S-transferase LANCL1 (LANCL1) from Bos taurus (Bovine).